Reading from the N-terminus, the 154-residue chain is Large-conductance mechanosensitive channel (154 aa).

2 helical membrane passes run 14 to 34 and 86 to 106; these read VVDL…VNSL and VFIN…FFVV.

It belongs to the MscL family. Homopentamer.

It is found in the cell membrane. Channel that opens in response to stretch forces in the membrane lipid bilayer. May participate in the regulation of osmotic pressure changes within the cell. This Dehalococcoides mccartyi (strain CBDB1) protein is Large-conductance mechanosensitive channel.